A 98-amino-acid chain; its full sequence is NADH-ubiquinone oxidoreductase chain 4L (98 aa).

The next 3 membrane-spanning stretches (helical) occupy residues 1–21 (MTTI…GVLI), 26–46 (LLST…LMAL), and 59–79 (APLI…ALLV).

Belongs to the complex I subunit 4L family. Core subunit of respiratory chain NADH dehydrogenase (Complex I) which is composed of 45 different subunits.

The protein resides in the mitochondrion inner membrane. It catalyses the reaction a ubiquinone + NADH + 5 H(+)(in) = a ubiquinol + NAD(+) + 4 H(+)(out). Its function is as follows. Core subunit of the mitochondrial membrane respiratory chain NADH dehydrogenase (Complex I) which catalyzes electron transfer from NADH through the respiratory chain, using ubiquinone as an electron acceptor. Part of the enzyme membrane arm which is embedded in the lipid bilayer and involved in proton translocation. The polypeptide is NADH-ubiquinone oxidoreductase chain 4L (MT-ND4L) (Rhyncholestes raphanurus (Chilean shrew opossum)).